A 282-amino-acid polypeptide reads, in one-letter code: HTH-type transcriptional activator RhaR (282 aa).

Residues 179–277 (DKLITALANS…GMTPSQWRHL (99 aa)) form the HTH araC/xylS-type domain. DNA-binding regions (H-T-H motif) lie at residues 196 to 217 (DAFC…RAQT) and 244 to 267 (ISEI…TRET).

In terms of assembly, binds DNA as a dimer.

It is found in the cytoplasm. Its function is as follows. Activates expression of the rhaSR operon in response to L-rhamnose. In Salmonella typhimurium (strain LT2 / SGSC1412 / ATCC 700720), this protein is HTH-type transcriptional activator RhaR.